The primary structure comprises 147 residues: Large ribosomal subunit protein bL9 (147 aa).

Belongs to the bacterial ribosomal protein bL9 family.

Binds to the 23S rRNA. The sequence is that of Large ribosomal subunit protein bL9 from Cytophaga hutchinsonii (strain ATCC 33406 / DSM 1761 / CIP 103989 / NBRC 15051 / NCIMB 9469 / D465).